We begin with the raw amino-acid sequence, 508 residues long: MEEFKRYLELDRSQQHDFVYPLIFQEYIYALAHDHGLNRSILLENIGYDNKSSLLIVKRLITHLITQMHQQNHFLFSANDSNQNPFFGHNTNLYSQMILEGFAVVVEIPFSLRLRFSLEGKEIVKSQNLRSIHSIFPFLEDKFSHLNYVLDILIPHSIHLEILVQTLRYWVKDASSLYLLRFFLHEYRNWNSLITPKKSSFSFSKRNQRLFLFLYNFHICEYESIFVFLRNQSSHLRSISSGTFLERRYFYGKIEHFLEVFTKDFQAVLWLFKDPFIHYVRYQGKSILASKGTSLLMNKWKYYLVNFWQCYFYMWSQPGRIHTNQLSKHSLDFLGYLSSVRLNPSMVRSQMLENSFLIGNTIKKFDTLVPIIPMIGSLSKAKFCNVLGHPISKPVWTDLSDSDILDQFGRIYRNLSHYHSGSSKKTSLYQIKYILRLSCARTLARKHKSTVRAFLKRLGSELLEEFFTGEEQVFSLTFPKASSTSRGLYRRRIWYLDIICINDLANHE.

The protein belongs to the intron maturase 2 family. MatK subfamily.

The protein resides in the plastid. The protein localises to the chloroplast. Usually encoded in the trnK tRNA gene intron. Probably assists in splicing its own and other chloroplast group II introns. The polypeptide is Maturase K (Gordonia lasianthus (Loblolly bay)).